The following is a 132-amino-acid chain: Actin-related protein 2/3 complex subunit 5A (132 aa).

Ala-2 is subject to N-acetylalanine.

This sequence belongs to the ARPC5 family. Component of the Arp2/3 complex composed of ARP2, ARP3, ARPC1/p41-ARC, ARPC2/p34-ARC, ARPC3/p21-ARC, ARPC4/p20-ARC and ARPC5/p16-ARC. Expressed at low levels in all tissues with a relatively highest expression in inflorescences.

The protein resides in the cytoplasm. It is found in the cytoskeleton. Its subcellular location is the cell projection. Functions as a component of the Arp2/3 complex which is involved in regulation of actin polymerization and together with an activating nucleation-promoting factor (NPF) mediates the formation of branched actin networks. Arp2/3 complex plays a critical role in the control of cell morphogenesis via the modulation of cell polarity development. This is Actin-related protein 2/3 complex subunit 5A (ARPC5A) from Arabidopsis thaliana (Mouse-ear cress).